The sequence spans 395 residues: FAD-dependent monooxygenase cctM (395 aa).

A signal peptide spans 1-23 (MEPGTDVRRVLVIGAGAAGLLIA). Residues glutamate 37, glycine 52, and arginine 112 each contribute to the FAD site. Residues asparagine 138 and asparagine 298 are each glycosylated (N-linked (GlcNAc...) asparagine). Residue aspartate 306 coordinates FAD.

It belongs to the paxM FAD-dependent monooxygenase family. It depends on FAD as a cofactor.

Its pathway is mycotoxin biosynthesis. In terms of biological role, FAD-dependent monooxygenase; part of the gene cluster that mediates the biosynthesis of the mycotoxin cyclochlorotine, a hepatotoxic and carcinogenic cyclic chlorinated pentapeptide. The function of cctM within the pathway, if any, remains undetermined. The NRPS cctN initially catalyzes the condensation of L-serine (Ser), Pro, L-2-aminobutyrate (2Abu), Ser, and beta-Phe in this order to produce isocyclotine. After the dichlorination of Pro2 catalyzed by cctP2 to produce isocyclochlorotine, the cctO-mediated transacylation of isocyclochlorotine can furnish cyclochlorotine. The subsequent hydroxylation of cyclochlorotine by cctR yields hydroxycyclochlorotine as the final product. CctP1 probably acts as a phenylalanine aminomutase and provides the uncommon building block beta-Phe. Furthermore, 2Abu can be synthesized from threonine by one of the threonine dehydratases and transaminases localized outside of the cluster. The functions of the remaining proteins encoded by the cluster, cctM and cctT, have not been identified yet. This chain is FAD-dependent monooxygenase cctM, found in Talaromyces islandicus (Penicillium islandicum).